The following is a 224-amino-acid chain: Phosphoribosylformylglycinamidine synthase subunit PurQ (224 aa).

The Glutamine amidotransferase type-1 domain occupies 2-224; sequence KIAVIVFPGS…SLLEEGKVKG (223 aa). The active-site Nucleophile is Cys86. Catalysis depends on residues His195 and Glu197.

As to quaternary structure, part of the FGAM synthase complex composed of 1 PurL, 1 PurQ and 2 PurS subunits.

It is found in the cytoplasm. The catalysed reaction is N(2)-formyl-N(1)-(5-phospho-beta-D-ribosyl)glycinamide + L-glutamine + ATP + H2O = 2-formamido-N(1)-(5-O-phospho-beta-D-ribosyl)acetamidine + L-glutamate + ADP + phosphate + H(+). It carries out the reaction L-glutamine + H2O = L-glutamate + NH4(+). It participates in purine metabolism; IMP biosynthesis via de novo pathway; 5-amino-1-(5-phospho-D-ribosyl)imidazole from N(2)-formyl-N(1)-(5-phospho-D-ribosyl)glycinamide: step 1/2. Its function is as follows. Part of the phosphoribosylformylglycinamidine synthase complex involved in the purines biosynthetic pathway. Catalyzes the ATP-dependent conversion of formylglycinamide ribonucleotide (FGAR) and glutamine to yield formylglycinamidine ribonucleotide (FGAM) and glutamate. The FGAM synthase complex is composed of three subunits. PurQ produces an ammonia molecule by converting glutamine to glutamate. PurL transfers the ammonia molecule to FGAR to form FGAM in an ATP-dependent manner. PurS interacts with PurQ and PurL and is thought to assist in the transfer of the ammonia molecule from PurQ to PurL. The polypeptide is Phosphoribosylformylglycinamidine synthase subunit PurQ (Ligilactobacillus salivarius (strain UCC118) (Lactobacillus salivarius)).